The sequence spans 477 residues: Ketoisovalerate oxidoreductase subunit VorA (477 aa).

Heterotrimer of the VorA, VorB and VorC subunits.

It catalyses the reaction 3-methyl-2-oxobutanoate + 2 oxidized [2Fe-2S]-[ferredoxin] + CoA = 2-methylpropanoyl-CoA + 2 reduced [2Fe-2S]-[ferredoxin] + CO2 + H(+). This is Ketoisovalerate oxidoreductase subunit VorA (vorA) from Methanothermobacter thermautotrophicus (strain ATCC 29096 / DSM 1053 / JCM 10044 / NBRC 100330 / Delta H) (Methanobacterium thermoautotrophicum).